The following is a 388-amino-acid chain: Calcium-binding and spermatid-specific protein 1 (388 aa).

The disordered stretch occupies residues 1-20 (MAEDGLPKIYSHPPAESTKT). Thr280 is subject to Phosphothreonine; by CK2. 2 positions are modified to phosphoserine: Ser312 and Ser344.

The protein resides in the cytoplasm. The protein localises to the mitochondrion inner membrane. It is found in the cell projection. Its subcellular location is the cilium. It localises to the flagellum. The protein resides in the cytoplasmic vesicle. The protein localises to the secretory vesicle. It is found in the acrosome. In terms of biological role, calcium-binding protein. Essential for maintaining the structural integrity of the sperm flagella. This is Calcium-binding and spermatid-specific protein 1 (CABS1) from Bos taurus (Bovine).